The following is a 372-amino-acid chain: Cobalt-precorrin-5B C(1)-methyltransferase (372 aa).

Belongs to the CbiD family.

The enzyme catalyses Co-precorrin-5B + S-adenosyl-L-methionine = Co-precorrin-6A + S-adenosyl-L-homocysteine. It participates in cofactor biosynthesis; adenosylcobalamin biosynthesis; cob(II)yrinate a,c-diamide from sirohydrochlorin (anaerobic route): step 6/10. Its function is as follows. Catalyzes the methylation of C-1 in cobalt-precorrin-5B to form cobalt-precorrin-6A. The chain is Cobalt-precorrin-5B C(1)-methyltransferase from Geobacillus kaustophilus (strain HTA426).